The sequence spans 183 residues: Glutamyl-tRNA(Gln) amidotransferase subunit F, mitochondrial (183 aa).

The transit peptide at 1–23 directs the protein to the mitochondrion; that stretch reads MSRMLNQIPRLITRSFRTSSVGY.

It belongs to the GatF family. In terms of assembly, subunit of the heterotrimeric GatFAB amidotransferase (AdT) complex, composed of A, B and F subunits.

The protein localises to the mitochondrion inner membrane. The catalysed reaction is L-glutamyl-tRNA(Gln) + L-glutamine + ATP + H2O = L-glutaminyl-tRNA(Gln) + L-glutamate + ADP + phosphate + H(+). Functionally, allows the formation of correctly charged Gln-tRNA(Gln) through the transamidation of misacylated Glu-tRNA(Gln) in the mitochondria. The reaction takes place in the presence of glutamine and ATP through an activated gamma-phospho-Glu-tRNA(Gln). Required for proper protein synthesis within the mitochondrion. The chain is Glutamyl-tRNA(Gln) amidotransferase subunit F, mitochondrial from Debaryomyces hansenii (strain ATCC 36239 / CBS 767 / BCRC 21394 / JCM 1990 / NBRC 0083 / IGC 2968) (Yeast).